Consider the following 114-residue polypeptide: C-X-C motif chemokine 6 (114 aa).

The N-terminal stretch at 1–37 is a signal peptide; sequence MSLPSSRAARVPGPSGSLCALLALLLLLTPPGPLASA. 2 disulfides stabilise this stretch: C49/C75 and C51/C91.

The protein belongs to the intercrine alpha (chemokine CxC) family.

The protein resides in the secreted. Functionally, chemotactic for neutrophil granulocytes. Signals through binding and activation of its receptors (CXCR1 and CXCR2). In addition to its chemotactic and angiogenic properties, it has strong antibacterial activity against Gram-positive and Gram-negative bacteria (90-fold-higher when compared to CXCL5 and CXCL7). The chain is C-X-C motif chemokine 6 (CXCL6) from Homo sapiens (Human).